The primary structure comprises 279 residues: Energy-coupling factor transporter ATP-binding protein EcfA1 (279 aa).

An ABC transporter domain is found at 6 to 240; the sequence is VRLEHVFYKY…ADAMREIGLG (235 aa). 40 to 47 lines the ATP pocket; that stretch reads GHNGSGKS.

This sequence belongs to the ABC transporter superfamily. Energy-coupling factor EcfA family. In terms of assembly, forms a stable energy-coupling factor (ECF) transporter complex composed of 2 membrane-embedded substrate-binding proteins (S component), 2 ATP-binding proteins (A component) and 2 transmembrane proteins (T component).

It is found in the cell membrane. ATP-binding (A) component of a common energy-coupling factor (ECF) ABC-transporter complex. Unlike classic ABC transporters this ECF transporter provides the energy necessary to transport a number of different substrates. The protein is Energy-coupling factor transporter ATP-binding protein EcfA1 of Listeria monocytogenes serovar 1/2a (strain ATCC BAA-679 / EGD-e).